Consider the following 393-residue polypeptide: Arginine--pyruvate transaminase AruH (393 aa).

Position 237 is an N6-(pyridoxal phosphate)lysine (K237).

Belongs to the class-I pyridoxal-phosphate-dependent aminotransferase family. Homodimer. Requires pyridoxal 5'-phosphate as cofactor.

It carries out the reaction L-arginine + pyruvate = 5-guanidino-2-oxopentanoate + L-alanine. The protein operates within amino-acid degradation; L-arginine degradation. Catalyzes the conversion of L-arginine into 2-ketoarginine via transamination. L-arginine is the best substrate, but it can also use L-lysine, L-methionine, L-leucine, ornithine and L-glutamine, which indicates that it may have a broader physiological function in amino acid catabolism. This Pseudomonas aeruginosa (strain ATCC 15692 / DSM 22644 / CIP 104116 / JCM 14847 / LMG 12228 / 1C / PRS 101 / PAO1) protein is Arginine--pyruvate transaminase AruH (aruH).